The primary structure comprises 283 residues: Protein/nucleic acid deglycase HchA (283 aa).

Residues His86, Glu91, and His123 each coordinate Zn(2+). Cys185 acts as the Nucleophile in catalysis.

It belongs to the peptidase C56 family. HchA subfamily. As to quaternary structure, homodimer.

It is found in the cytoplasm. The catalysed reaction is N(omega)-(1-hydroxy-2-oxopropyl)-L-arginyl-[protein] + H2O = lactate + L-arginyl-[protein] + H(+). It carries out the reaction N(6)-(1-hydroxy-2-oxopropyl)-L-lysyl-[protein] + H2O = lactate + L-lysyl-[protein] + H(+). It catalyses the reaction S-(1-hydroxy-2-oxopropyl)-L-cysteinyl-[protein] + H2O = lactate + L-cysteinyl-[protein] + H(+). The enzyme catalyses N(omega)-(1-hydroxy-2-oxoethyl)-L-arginyl-[protein] + H2O = L-arginyl-[protein] + glycolate + H(+). The catalysed reaction is N(6)-(1-hydroxy-2-oxoethyl)-L-lysyl-[protein] + H2O = glycolate + L-lysyl-[protein] + H(+). It carries out the reaction S-(1-hydroxy-2-oxoethyl)-L-cysteinyl-[protein] + H2O = glycolate + L-cysteinyl-[protein] + H(+). It catalyses the reaction N(2)-(1-hydroxy-2-oxopropyl)-dGTP + H2O = lactate + dGTP + H(+). The enzyme catalyses N(2)-(1-hydroxy-2-oxopropyl)-GTP + H2O = lactate + GTP + H(+). The catalysed reaction is N(2)-(1-hydroxy-2-oxopropyl)-GDP + H2O = lactate + GDP + H(+). It carries out the reaction N(2)-(1-hydroxy-2-oxopropyl)-GMP + H2O = lactate + GMP + H(+). It catalyses the reaction N(2)-(1-hydroxy-2-oxoethyl)-dGTP + H2O = dGTP + glycolate + H(+). The enzyme catalyses N(2)-(1-hydroxy-2-oxoethyl)-GTP + H2O = glycolate + GTP + H(+). The catalysed reaction is N(2)-(1-hydroxy-2-oxoethyl)-GDP + H2O = glycolate + GDP + H(+). It carries out the reaction N(2)-(1-hydroxy-2-oxoethyl)-GMP + H2O = glycolate + GMP + H(+). It catalyses the reaction an N(2)-(1-hydroxy-2-oxopropyl)-guanosine in RNA + H2O = a guanosine in RNA + lactate + H(+). The enzyme catalyses an N(2)-(1-hydroxy-2-oxopropyl)-2'-deoxyguanosine in DNA + H2O = a 2'-deoxyguanosine in DNA + lactate + H(+). The catalysed reaction is an N(2)-(1-hydroxy-2-oxoethyl)-guanosine in RNA + H2O = a guanosine in RNA + glycolate + H(+). It carries out the reaction an N(2)-(1-hydroxy-2-oxoethyl)-2'-deoxyguanosine in DNA + H2O = a 2'-deoxyguanosine in DNA + glycolate + H(+). In terms of biological role, protein and nucleotide deglycase that catalyzes the deglycation of the Maillard adducts formed between amino groups of proteins or nucleotides and reactive carbonyl groups of glyoxals. Thus, functions as a protein deglycase that repairs methylglyoxal- and glyoxal-glycated proteins, and releases repaired proteins and lactate or glycolate, respectively. Deglycates cysteine, arginine and lysine residues in proteins, and thus reactivates these proteins by reversing glycation by glyoxals. Acts on early glycation intermediates (hemithioacetals and aminocarbinols), preventing the formation of Schiff bases and advanced glycation endproducts (AGE). Also functions as a nucleotide deglycase able to repair glycated guanine in the free nucleotide pool (GTP, GDP, GMP, dGTP) and in DNA and RNA. Is thus involved in a major nucleotide repair system named guanine glycation repair (GG repair), dedicated to reversing methylglyoxal and glyoxal damage via nucleotide sanitization and direct nucleic acid repair. Plays an important role in protecting cells from carbonyl stress. This chain is Protein/nucleic acid deglycase HchA, found in Escherichia coli (strain K12 / MC4100 / BW2952).